A 94-amino-acid polypeptide reads, in one-letter code: Pyrimidine/purine nucleoside phosphorylase (94 aa).

The protein belongs to the nucleoside phosphorylase PpnP family.

The catalysed reaction is a purine D-ribonucleoside + phosphate = a purine nucleobase + alpha-D-ribose 1-phosphate. It catalyses the reaction adenosine + phosphate = alpha-D-ribose 1-phosphate + adenine. It carries out the reaction cytidine + phosphate = cytosine + alpha-D-ribose 1-phosphate. The enzyme catalyses guanosine + phosphate = alpha-D-ribose 1-phosphate + guanine. The catalysed reaction is inosine + phosphate = alpha-D-ribose 1-phosphate + hypoxanthine. It catalyses the reaction thymidine + phosphate = 2-deoxy-alpha-D-ribose 1-phosphate + thymine. It carries out the reaction uridine + phosphate = alpha-D-ribose 1-phosphate + uracil. The enzyme catalyses xanthosine + phosphate = alpha-D-ribose 1-phosphate + xanthine. Functionally, catalyzes the phosphorolysis of diverse nucleosides, yielding D-ribose 1-phosphate and the respective free bases. Can use uridine, adenosine, guanosine, cytidine, thymidine, inosine and xanthosine as substrates. Also catalyzes the reverse reactions. The chain is Pyrimidine/purine nucleoside phosphorylase from Salmonella heidelberg (strain SL476).